The chain runs to 640 residues: UvrABC system protein C (640 aa).

Residues 35 to 113 form the GIY-YIG domain; it reads DAPGVYRMIG…IKQLKPRFNV (79 aa). One can recognise a UVR domain in the interval 223–258; it reads RAVMATMAKAMEEAAEELEFERAARLRDRIRALSAV.

This sequence belongs to the UvrC family. As to quaternary structure, interacts with UvrB in an incision complex.

The protein localises to the cytoplasm. Functionally, the UvrABC repair system catalyzes the recognition and processing of DNA lesions. UvrC both incises the 5' and 3' sides of the lesion. The N-terminal half is responsible for the 3' incision and the C-terminal half is responsible for the 5' incision. The sequence is that of UvrABC system protein C from Caulobacter vibrioides (strain ATCC 19089 / CIP 103742 / CB 15) (Caulobacter crescentus).